Consider the following 246-residue polypeptide: DNA repair protein RecO (246 aa).

It belongs to the RecO family.

Involved in DNA repair and RecF pathway recombination. The protein is DNA repair protein RecO of Methylorubrum extorquens (strain CM4 / NCIMB 13688) (Methylobacterium extorquens).